We begin with the raw amino-acid sequence, 198 residues long: Guanylyl cyclase-activating protein 2 (198 aa).

Gly2 is lipidated: N-myristoyl glycine. 4 EF-hand domains span residues 16–51 (DVAE…QDNH), 52–87 (EAAE…VLRG), 88–123 (KLEH…IYKL), and 139–174 (TPEE…DKWV). Residues Asp65, Asn67, Asp69, Thr71, Glu76, Asp101, Asp103, Asn105, Cys107, Glu112, Asp152, Asn154, Asp156, Gln158, and Glu163 each coordinate Ca(2+).

As to quaternary structure, undergoes dimerization at low calcium ions concentration, while the presence of calcium ions inhibits its dimerization. Dimerization correlates with its ability to activate GC. In terms of tissue distribution, retina and pineal gland.

In terms of biological role, stimulates synthesis of cGMP in photoreceptors. Thought to mediate Ca(2+)-sensitive regulation of retinal guanylyl cyclase (GC), a key event in recovery of the dark state of rod photoreceptors following light exposure. The chain is Guanylyl cyclase-activating protein 2 (GUCA1B) from Gallus gallus (Chicken).